The primary structure comprises 140 residues: Myelodysplastic syndrome 2 translocation-associated protein (140 aa).

Highly expressed in peripheral blood leukocytes, spleen, thymus, kidney, pancreas and lung.

The protein is Myelodysplastic syndrome 2 translocation-associated protein (MDS2) of Homo sapiens (Human).